A 152-amino-acid chain; its full sequence is MFKGASAINLDAKGRIAIPTRYREPLLSAHEGKLVITVDIQANCLLIYPADEWSLIEAKLLKLSDTQPTERALKRMLLGYAHEIEMDSNGRLLLPPPLRQYAQLDKKAMLVGQLNKFELWDEAQWQAQIQSAQDVIRSEDLAANERLADFSL.

SpoVT-AbrB domains follow at residues 5 to 52 and 81 to 124; these read ASAI…PADE and AHEI…DEAQ.

It belongs to the MraZ family. Forms oligomers.

The protein localises to the cytoplasm. Its subcellular location is the nucleoid. The chain is Transcriptional regulator MraZ from Shewanella amazonensis (strain ATCC BAA-1098 / SB2B).